We begin with the raw amino-acid sequence, 356 residues long: PEP-dependent dihydroxyacetone kinase, dihydroxyacetone-binding subunit DhaK (356 aa).

Residues 7–352 (DVQDVLDEQL…WDAPVHTPAL (346 aa)) enclose the DhaK domain. Dihydroxyacetone is bound by residues 53 to 56 (GSGH), Lys-104, and Asp-109. Residue His-56 is the Proton acceptor of the active site. His-218 functions as the Tele-hemiaminal-histidine intermediate in the catalytic mechanism.

Homodimer. The dihydroxyacetone kinase complex is composed of a homodimer of DhaM, a homodimer of DhaK and the subunit DhaL. DhaL also forms a complex with DhaR.

The catalysed reaction is dihydroxyacetone + phosphoenolpyruvate = dihydroxyacetone phosphate + pyruvate. Its pathway is polyol metabolism; glycerol degradation. Its activity is regulated as follows. Inhibited by chloro-3-hydroxyacetone and D,L-glyceraldehyde. Dihydroxyacetone binding subunit of the dihydroxyacetone kinase, which is responsible for the phosphoenolpyruvate (PEP)-dependent phosphorylation of dihydroxyacetone via a phosphoryl group transfer from DhaL-ATP. Binds covalently dihydroxyacetone in hemiaminal linkage. DhaK also acts as corepressor of the transcription activator DhaR by binding to the sensor domain of DhaR. In the presence of dihydroxyacetone, DhaL-ADP displaces DhaK and stimulates DhaR activity. In the absence of dihydroxyacetone, DhaL-ADP is converted by the PTS to DhaL-ATP, which does not bind to DhaR. The polypeptide is PEP-dependent dihydroxyacetone kinase, dihydroxyacetone-binding subunit DhaK (Escherichia coli (strain K12)).